A 610-amino-acid chain; its full sequence is Granule-bound starch synthase 1, chloroplastic/amyloplastic (610 aa).

The transit peptide at 1–79 (MATVTASSNF…SKVKTAGKIV (79 aa)) directs the protein to the chloroplast. Lysine 98 contributes to the ADP-alpha-D-glucose binding site. A coiled-coil region spans residues 438–454 (TGKKKMEAQILELEEKF).

Belongs to the glycosyltransferase 1 family. Bacterial/plant glycogen synthase subfamily. As to quaternary structure, interacts with PTST. This interaction is critical for the localization to starch granules. Expressed in roots, inflorescences, flowers, fruits and at much higher levels in leaves.

Its subcellular location is the plastid. The protein localises to the chloroplast. It catalyses the reaction an NDP-alpha-D-glucose + [(1-&gt;4)-alpha-D-glucosyl](n) = [(1-&gt;4)-alpha-D-glucosyl](n+1) + a ribonucleoside 5'-diphosphate + H(+). Its pathway is glycan biosynthesis; starch biosynthesis. In terms of biological role, required for the synthesis of amylose. Destroyed as it is released from the starch granules during the night. The circadian expression is controlled by CCA1 and LHY transcription factors. The chain is Granule-bound starch synthase 1, chloroplastic/amyloplastic from Arabidopsis thaliana (Mouse-ear cress).